A 342-amino-acid polypeptide reads, in one-letter code: MVSVTRSVFGDLPSGAGTVEKFQLQSDQLRVDIISWGCTITALEVKDRQGRASDVVLGFAELKEYLQKHPYFGAVVGRVANRIAKGTFTLDGKEYKLAINNGPNSLHGGVRGFDKVLWTPRVLSNGIEFSRVSPDGEEGYPGELKVWVTYTLDGGELVVNYRAQASQTTPVNLTNHSYFNLAGQGSPNIYDHEVTIEADAFLPVDETLIPTGEIAPVQGTAFDLRKPVELGKHLQEFHINGFDHNFCLKRSKEKQFCARVHHAGSGRVLEVYTTQPGIQFYTGNFLDGTLKGKTGAVYPKHSGFCLETQNWPNAVNQPHFPPVLLKPGEEYNHTTWFVFSVA.

Ser14 bears the Phosphoserine mark. Beta-D-galactose-binding positions include 81 to 82 (NR) and His107. At Ser124 the chain carries Phosphoserine. Catalysis depends on His176, which acts as the Proton donor. Beta-D-galactose-binding positions include 176–178 (HSY), Asp243, Gln279, and Glu307. Catalysis depends on Glu307, which acts as the Proton acceptor.

Belongs to the aldose epimerase family. As to quaternary structure, monomer.

It localises to the cytoplasm. It catalyses the reaction alpha-D-galactose = beta-D-galactose. It carries out the reaction alpha-D-glucose = beta-D-glucose. Its pathway is carbohydrate metabolism; hexose metabolism. The protein operates within carbohydrate metabolism; galactose metabolism. Mutarotase that catalyzes the interconversion of beta-D-galactose and alpha-D-galactose during galactose metabolism. Beta-D-galactose is metabolized in the liver into glucose 1-phosphate, the primary metabolic fuel, by the action of four enzymes that constitute the Leloir pathway: GALM, GALK1 (galactokinase), GALT (galactose-1-phosphate uridylyltransferase) and GALE (UDP-galactose-4'-epimerase). Involved in the maintenance of the equilibrium between the beta- and alpha-anomers of galactose, therefore ensuring a sufficient supply of the alpha-anomer for GALK1. Also active on D-glucose although shows a preference for galactose over glucose. This is Galactose mutarotase (GALM) from Sus scrofa (Pig).